We begin with the raw amino-acid sequence, 354 residues long: 5,10-methenyltetrahydromethanopterin hydrogenase (354 aa).

The protein belongs to the HMD family.

The catalysed reaction is 5,10-methenyl-5,6,7,8-tetrahydromethanopterin + H2 = 5,10-methylenetetrahydromethanopterin + H(+). It functions in the pathway one-carbon metabolism; methanogenesis from CO(2); 5,10-methylene-5,6,7,8-tetrahydromethanopterin from 5,10-methenyl-5,6,7,8-tetrahydromethanopterin (hydrogen route): step 1/1. Functionally, catalyzes the reversible reduction of methenyl-H(4)MPT(+) to methylene-H(4)MPT. The polypeptide is 5,10-methenyltetrahydromethanopterin hydrogenase (Methanococcus maripaludis (strain DSM 14266 / JCM 13030 / NBRC 101832 / S2 / LL)).